Consider the following 595-residue polypeptide: Beta-(1--&gt;2)glucan export ATP-binding/permease protein NdvA (595 aa).

The next 5 helical transmembrane spans lie at 21–41 (FLLICTANITLAIITIAEPIL), 56–76 (LVTLAVWMCFGISNIIAYVLV), 129–149 (IWLEFMRQHLSTFVALFVLVP), 158–178 (LSIVLMVLAILYILIARLVMQ), and 252–272 (ISIVCVLLLGAFFVIKGQLSV). The ABC transmembrane type-1 domain maps to 21–301 (FLLICTANIT…ISGFINLAVS (281 aa)). An ABC transporter domain is found at 335-569 (IQFHHVTYEF…DGHFYKLLKR (235 aa)). 368–375 (GPTGAGKT) provides a ligand contact to ATP.

Belongs to the ABC transporter superfamily. Beta-(1--&gt;2)glucan exporter (TC 3.A.1.108.1) family. Homodimer.

It localises to the cell inner membrane. It carries out the reaction [(1-&gt;2)-beta-D-glucosyl](n)(in) + ATP + H2O = [(1-&gt;2)-beta-D-glucosyl](n)(out) + ADP + phosphate + H(+). Involved in beta-(1--&gt;2)glucan export. Transmembrane domains (TMD) form a pore in the inner membrane and the ATP-binding domain (NBD) is responsible for energy generation. The chain is Beta-(1--&gt;2)glucan export ATP-binding/permease protein NdvA from Bartonella bacilliformis.